Reading from the N-terminus, the 52-residue chain is Conotoxin Cal9.2b (52 aa).

A propeptide spanning residues 1-6 (KKGVTL) is cleaved from the precursor. Intrachain disulfides connect Cys14–Cys31, Cys19–Cys41, and Cys21–Cys46.

As to expression, expressed by the venom duct.

It localises to the secreted. Functionally, probable neurotoxin with unknown target. Possibly targets ion channels. The chain is Conotoxin Cal9.2b from Californiconus californicus (California cone).